Consider the following 906-residue polypeptide: Protein translocase subunit SecA (906 aa).

ATP contacts are provided by residues Q86, 104 to 108, and D499; that span reads GEGKT. The Zn(2+) site is built by C890, C892, C901, and H902.

It belongs to the SecA family. In terms of assembly, monomer and homodimer. Part of the essential Sec protein translocation apparatus which comprises SecA, SecYEG and auxiliary proteins SecDF-YajC and YidC. Zn(2+) is required as a cofactor.

It localises to the cell inner membrane. The protein localises to the cytoplasm. It carries out the reaction ATP + H2O + cellular proteinSide 1 = ADP + phosphate + cellular proteinSide 2.. Its function is as follows. Part of the Sec protein translocase complex. Interacts with the SecYEG preprotein conducting channel. Has a central role in coupling the hydrolysis of ATP to the transfer of proteins into and across the cell membrane, serving both as a receptor for the preprotein-SecB complex and as an ATP-driven molecular motor driving the stepwise translocation of polypeptide chains across the membrane. The protein is Protein translocase subunit SecA of Rickettsia prowazekii (strain Madrid E).